A 291-amino-acid polypeptide reads, in one-letter code: Small ribosomal subunit protein uS2 (291 aa).

Positions 254–291 are disordered; that stretch reads RTSNRDNKNNKNNNNTDNTDNAASIKEEDLIGGSNNEN. Residues 263 to 277 show a composition bias toward low complexity; that stretch reads NKNNNNTDNTDNAAS.

Belongs to the universal ribosomal protein uS2 family.

The chain is Small ribosomal subunit protein uS2 from Ehrlichia canis (strain Jake).